Consider the following 148-residue polypeptide: 3-dehydroquinate dehydratase (148 aa).

Catalysis depends on Tyr23, which acts as the Proton acceptor. Substrate-binding residues include Asn75, His81, and Asp88. Catalysis depends on His101, which acts as the Proton donor. Substrate contacts are provided by residues 102-103 and Arg112; that span reads MS.

This sequence belongs to the type-II 3-dehydroquinase family. In terms of assembly, homododecamer.

It catalyses the reaction 3-dehydroquinate = 3-dehydroshikimate + H2O. It functions in the pathway metabolic intermediate biosynthesis; chorismate biosynthesis; chorismate from D-erythrose 4-phosphate and phosphoenolpyruvate: step 3/7. In terms of biological role, catalyzes a trans-dehydration via an enolate intermediate. The polypeptide is 3-dehydroquinate dehydratase (Syntrophotalea carbinolica (strain DSM 2380 / NBRC 103641 / GraBd1) (Pelobacter carbinolicus)).